Here is a 91-residue protein sequence, read N- to C-terminus: Small integral membrane protein 12 (91 aa).

A helical membrane pass occupies residues 12–34; sequence YAPYITFPVAFVVGAVGYQLEWF.

This sequence belongs to the SMIM12 family.

It is found in the membrane. The sequence is that of Small integral membrane protein 12 (smim12) from Xenopus tropicalis (Western clawed frog).